A 261-amino-acid chain; its full sequence is Thiazole synthase (261 aa).

Lys102 functions as the Schiff-base intermediate with DXP in the catalytic mechanism. 1-deoxy-D-xylulose 5-phosphate is bound by residues Gly163, 189 to 190, and 211 to 212; these read AG and NT.

This sequence belongs to the ThiG family. In terms of assembly, homotetramer. Forms heterodimers with either ThiH or ThiS.

The protein resides in the cytoplasm. The catalysed reaction is [ThiS sulfur-carrier protein]-C-terminal-Gly-aminoethanethioate + 2-iminoacetate + 1-deoxy-D-xylulose 5-phosphate = [ThiS sulfur-carrier protein]-C-terminal Gly-Gly + 2-[(2R,5Z)-2-carboxy-4-methylthiazol-5(2H)-ylidene]ethyl phosphate + 2 H2O + H(+). The protein operates within cofactor biosynthesis; thiamine diphosphate biosynthesis. In terms of biological role, catalyzes the rearrangement of 1-deoxy-D-xylulose 5-phosphate (DXP) to produce the thiazole phosphate moiety of thiamine. Sulfur is provided by the thiocarboxylate moiety of the carrier protein ThiS. In vitro, sulfur can be provided by H(2)S. This is Thiazole synthase from Acinetobacter baumannii (strain AB307-0294).